We begin with the raw amino-acid sequence, 480 residues long: Aspartyl/glutamyl-tRNA(Asn/Gln) amidotransferase subunit B (480 aa).

This sequence belongs to the GatB/GatE family. GatB subfamily. As to quaternary structure, heterotrimer of A, B and C subunits.

The catalysed reaction is L-glutamyl-tRNA(Gln) + L-glutamine + ATP + H2O = L-glutaminyl-tRNA(Gln) + L-glutamate + ADP + phosphate + H(+). It carries out the reaction L-aspartyl-tRNA(Asn) + L-glutamine + ATP + H2O = L-asparaginyl-tRNA(Asn) + L-glutamate + ADP + phosphate + 2 H(+). In terms of biological role, allows the formation of correctly charged Asn-tRNA(Asn) or Gln-tRNA(Gln) through the transamidation of misacylated Asp-tRNA(Asn) or Glu-tRNA(Gln) in organisms which lack either or both of asparaginyl-tRNA or glutaminyl-tRNA synthetases. The reaction takes place in the presence of glutamine and ATP through an activated phospho-Asp-tRNA(Asn) or phospho-Glu-tRNA(Gln). The chain is Aspartyl/glutamyl-tRNA(Asn/Gln) amidotransferase subunit B from Streptococcus pneumoniae serotype 19F (strain G54).